Consider the following 168-residue polypeptide: MLVYQDLLTGDELLSDSFPYKEVENGVLWEVQGKWVVQGAVDVNIGANPSAEGGCEDEGVDDQAVRVVDIVDTFRLQEQPAFDKKQFVTFMKRYIKNLTPKLEGETQEAFKKNIEAATKFLLQKIKDLQFFVGESMHDDGALVFAYYKEGSADPPFLYIAPGLKEIKC.

A TCTP domain is found at 1 to 168 (MLVYQDLLTG…IAPGLKEIKC (168 aa)).

It belongs to the TCTP family.

Its subcellular location is the cytoplasm. Functionally, involved in calcium binding and microtubule stabilization. The chain is Translationally-controlled tumor protein homolog (TCTP) from Solanum lycopersicum (Tomato).